The sequence spans 293 residues: uncharacterized protein (293 aa).

The active site involves Glu47.

This sequence belongs to the PhzF family.

This is an uncharacterized protein from Bacillus subtilis (strain 168).